A 261-amino-acid chain; its full sequence is Ribosomal RNA small subunit methyltransferase J (261 aa).

Residues Arg111–Asp112, Glu127–Arg128, Ser163–Ser164, and Asp181 each bind S-adenosyl-L-methionine.

The protein belongs to the methyltransferase superfamily. RsmJ family.

It localises to the cytoplasm. The enzyme catalyses guanosine(1516) in 16S rRNA + S-adenosyl-L-methionine = N(2)-methylguanosine(1516) in 16S rRNA + S-adenosyl-L-homocysteine + H(+). Its function is as follows. Specifically methylates the guanosine in position 1516 of 16S rRNA. In Shewanella sp. (strain MR-7), this protein is Ribosomal RNA small subunit methyltransferase J.